Reading from the N-terminus, the 53-residue chain is uncharacterized protein (53 aa).

A helical transmembrane segment spans residues 20-42 (ILFPVLLVFDTILIVVGIALILF).

Its subcellular location is the membrane. This is an uncharacterized protein from Archaeoglobus fulgidus (strain ATCC 49558 / DSM 4304 / JCM 9628 / NBRC 100126 / VC-16).